Consider the following 205-residue polypeptide: High frequency lysogenization protein HflD homolog (205 aa).

The protein belongs to the HflD family.

Its subcellular location is the cytoplasm. The protein localises to the cell inner membrane. This is High frequency lysogenization protein HflD homolog from Vibrio cholerae serotype O1 (strain ATCC 39541 / Classical Ogawa 395 / O395).